Reading from the N-terminus, the 342-residue chain is Ribosomal RNA small subunit methyltransferase C (342 aa).

The protein belongs to the methyltransferase superfamily. RsmC family. In terms of assembly, monomer.

It is found in the cytoplasm. The enzyme catalyses guanosine(1207) in 16S rRNA + S-adenosyl-L-methionine = N(2)-methylguanosine(1207) in 16S rRNA + S-adenosyl-L-homocysteine + H(+). Its function is as follows. Specifically methylates the guanine in position 1207 of 16S rRNA in the 30S particle. This Salmonella newport (strain SL254) protein is Ribosomal RNA small subunit methyltransferase C.